The sequence spans 2295 residues: MDPEEQELLNDYRYRSYSSVIEKALRNFESSSEWADLISSLGKLNKALQSNLKYSLLPRRLIISKRLAQCLHPALPSGVHLKALETYEIIFKIVGTKWLAKDLFLYSCGLFPLLAYAAMSVRPVLLGLYEKYFLPLQKLLLPSLQAFLVGLLPGLEEGSEIYERTDALLLRLSVVVGREVFYAALWGSVLTSPSIRLPASLFVVNHISRDSPGKEQKCMLGTDYQLTVRSLCASLLDANVLVQRNNLEIILFFFPFYTCLDPEERAIPLLRRDVVHILSAATQTLLRRDMSLNRRLYAWLLGSDIKGNTIVPKSEISNSYEDQCSYFFDKYSKDLLVEALAEILHQKFLDADLEERHHAYLKPFRILVSLLDKPEIGPQVVENLFLEVIRAFYSYCHDVLGSDLKLSYTQSGNPLISTIKENRHASEIVKTVNLLVSSLSSDFLWDYMARRFEACFRPVTQTTAIGEAISPPPTVSELCTLLVFLLDVIPLELYSEVQTQYLPQVLGCLLQPLAEEVEALSLPELTHALKTCFKVLSKVQMPPSYLDLEPSSGNSSPVKGRNSGIAMETEAVVAGDEEPSFPPLKSEDSGIGLSASSPELSEHLRVPRVSAERDDIWKKDGTMQATFLCIQELIANFASKNIFAASLTVSGEENKPEEPPGKGNKGQTQSTEHPGRKSSWDPKPITVPQFKQMLSDLFTVRGSPFKTRSSESLSSVPSSPHRKAATEWGVDQVVVELVGSKEDCREALAAACHLLLDCATFPVYLSEEETEQLCETLFQTPGASDCSFPPWLKSLMTICCCVSDCSLQNIAIATLLEVINHSQSLALVIEDKMKRYKTSGNNPFFGKLQMVTVPPIAPGILKVIAEKTDFYQRVARVLWNQLNKETREHHITCVELFYRLHCLAPTANICEDIICHALLDPDKGTRLEALFRFSVIWHLTREIQGSRVTSHNRSFDRSLFVVLDSLACTDGAISAAAQGWLVRALSLGDVARILEPMLLLLLQPKTQRTSIQCLKQENSAEDLHRWFNRKKPTCKEACGESEPQEGAPEERLPRGQFTTVDREAIWAEVEKEPEKCPPRSDLSEEDLPYYVDLPDRMTSGGGDSSEHTESADTSSGHTDSENTSTFSSPSHDLQDLSHEENCCAPIPIGGRAYSKRAALLAAFQPESPRSNARLSLVRADSDKTQASESFSSDEEADVELQAITTSRLLKQQREKQETVEALFKHILLYLQPYDSQRVLYAFSVLEAVLKTNPKEFIEAVSRTGIDTSSTAHLNLISNLLARHQEALIGQSFYGKLQTQAPNVCPHSLLIELLTYLCLSFLRSYYPCYLKVCHRDILGNRDVQVKSVEVLIRITAQLVSMAKSAEGKNTEFIHSLLQRCKVQEFVLLSLSASMYTSQKRYGLATADRGGRLLAEDSLFEESLINLGQDQIWSEHPLQIELLKLLQALIVLEHHLGQGQEEAETQPALSREWQRALNFQQAIGAMQYVQPHPLTSQGLLVSAVVRGLQPAYGYGMHPAWVSLVTHSLPYFGKSLGWTVTPFVIQICKNLDDLVKQYESESVKFTISTTSKKENISPDYPLTLLEGLTTISHFCLLEQPTQHKKTAAVSDPINLRNAKNAILEELPRIVNTMALIWNVLRKEETQKRPVDLLGATKGSSSVYFKTTKTIRQKILDLLNPLTGHLGVQLIAAVATVWNRKQARRHSKTKMVPVANTSQHTLVDLVCALSTLQTDSVLQLVKEVVKRPAQIKGDEKSPLVDIPVLQFCYAFIQRLSIPDLQEAFPSLLGVLKEAAQLNLAPPGYFLLLSMLNDFVTRTPNLESKKDQKDLQEITQRILEAVGTIAGSSLEQTSWLSRNLEVKAQPQVSLEESDAEDDVHSAAEASTMVSASAPSVYSVQALSLLAEVLASLLDMVYRSDEKEKAVPLISRLLYYVFPYLRNHSAYNAPSFRAGAQLLSSLSGYAYTKRAWKKEVLELFLDPAFFQMDTSCVHWKSVIDHLLTHEKTMFKDLMNMQSSSLKLFSSFEQKAMLLKRQAFAVFSGELDQYHLYLPLIQERLTDNLRVGQTSIVAGQMFLFFRVLLLRISPQHLTSLWPIMVSELIQTFIQLEEDLKEEDESRNSHKSNRIKAPVADGNGSAGRVLSPSDLTMYLSACKFLDTALAFPPDKMPLFQIYRWAFVPEVDTEHPAFLSELEENHQECRPHTVRILELLRSRYGEIGSSDEITRKKEFPLLRQHSVSCIRQLIPFFTTLNCAFKTQSQLPADVPGTAAPECPVTENPRVLRQLEECVEQDFLEHPEC.

Residues Ser556 and Ser597 each carry the phosphoserine modification. Disordered stretches follow at residues 574-599 (AGDE…SSPE), 651-684 (GEEN…DPKP), 1034-1059 (CKEA…QFTT), and 1092-1136 (DLPD…LQDL). Residues 1111–1131 (ADTSSGHTDSENTSTFSSPSH) are compositionally biased toward polar residues. Ser1167 is subject to Phosphoserine.

This sequence belongs to the DOP1 family. In terms of assembly, homooligomer. Heterotrimer with ATP9A and MON2; this interaction is retromer-independent. Interacts with SNX3. Expressed in liver, heart and brain.

The protein localises to the early endosome membrane. It is found in the golgi apparatus membrane. Its function is as follows. May play a role in regulating membrane trafficking of cargo proteins. Together with ATP9A and MON2, regulates SNX3 retromer-mediated endosomal sorting of WLS away from lysosomal degradation. The protein is Protein DOP1B (Dop1b) of Mus musculus (Mouse).